Consider the following 448-residue polypeptide: Exodeoxyribonuclease 7 large subunit (448 aa).

It belongs to the XseA family. As to quaternary structure, heterooligomer composed of large and small subunits.

The protein localises to the cytoplasm. Its subcellular location is the nucleoid. The enzyme catalyses Exonucleolytic cleavage in either 5'- to 3'- or 3'- to 5'-direction to yield nucleoside 5'-phosphates.. Its function is as follows. Bidirectionally degrades single-stranded DNA into large acid-insoluble oligonucleotides, which are then degraded further into small acid-soluble oligonucleotides. In Bacillus subtilis (strain 168), this protein is Exodeoxyribonuclease 7 large subunit.